The chain runs to 492 residues: Probable endopolygalacturonase D (492 aa).

An N-terminal signal peptide occupies residues 1–16 (MKRSALILSFLPLVFG). The cysteines at positions 151 and 166 are disulfide-linked. 4 PbH1 repeats span residues 216-238 (GTSVTITGVEGHVIDGNGAAYWD), 258-280 (MYNSRIENLYIQNWPVHCFEIES), 281-319 (TEHLTVSGLTLNNSAGDAANSKSDGDPAAHNSDGFDIKE), and 320-341 (SSYFTLENTWVHNQDDCVAVTS). N292 carries an N-linked (GlcNAc...) asparagine glycan. The active-site Proton donor is the D334. The cysteines at positions 336 and 352 are disulfide-linked. The active site involves H356. PbH1 repeat units lie at residues 371 to 392 (VNGVTFSNSQVISSQNGCRIKT), 400 to 422 (VYNIRYENITLSDISDYGIDVQQ), and 434 to 478 (TNGV…SITG). N-linked (GlcNAc...) asparagine glycosylation is found at N407 and N441. Cystine bridges form between C461/C466 and C484/C491.

Belongs to the glycosyl hydrolase 28 family.

It is found in the secreted. The catalysed reaction is (1,4-alpha-D-galacturonosyl)n+m + H2O = (1,4-alpha-D-galacturonosyl)n + (1,4-alpha-D-galacturonosyl)m.. Involved in maceration and soft-rotting of plant tissue. Hydrolyzes the 1,4-alpha glycosidic bonds of de-esterified pectate in the smooth region of the plant cell wall. The sequence is that of Probable endopolygalacturonase D (pgaD) from Aspergillus oryzae (strain ATCC 42149 / RIB 40) (Yellow koji mold).